The following is a 305-amino-acid chain: Glycine--tRNA ligase alpha subunit (305 aa).

It belongs to the class-II aminoacyl-tRNA synthetase family. In terms of assembly, tetramer of two alpha and two beta subunits.

It is found in the cytoplasm. The enzyme catalyses tRNA(Gly) + glycine + ATP = glycyl-tRNA(Gly) + AMP + diphosphate. In Streptococcus gordonii (strain Challis / ATCC 35105 / BCRC 15272 / CH1 / DL1 / V288), this protein is Glycine--tRNA ligase alpha subunit.